A 584-amino-acid polypeptide reads, in one-letter code: A-type ATP synthase subunit A 2 (584 aa).

ATP is bound at residue 227-234; it reads GGFGTGKT.

This sequence belongs to the ATPase alpha/beta chains family. In terms of assembly, has multiple subunits with at least A(3), B(3), C, D, E, F, H, I and proteolipid K(x).

Its subcellular location is the cell membrane. The catalysed reaction is ATP + H2O + 4 H(+)(in) = ADP + phosphate + 5 H(+)(out). In terms of biological role, component of the A-type ATP synthase that produces ATP from ADP in the presence of a proton gradient across the membrane. The A chain is the catalytic subunit. The chain is A-type ATP synthase subunit A 2 from Methanospirillum hungatei JF-1 (strain ATCC 27890 / DSM 864 / NBRC 100397 / JF-1).